The sequence spans 113 residues: U11-theraphotoxin-Hhn1q (113 aa).

Residues 1–21 (MNTVRVTFLLVFVLAVSLGQA) form the signal peptide. Positions 22–74 (DKDENRMEMQEKTEQGKSYLDFAENLLLQKLEELEAKLLEEDSEESRNSRQKR) are excised as a propeptide. Residues 61–82 (EEDSEESRNSRQKRCIGEGVPC) are disordered. 3 disulfides stabilise this stretch: Cys-75-Cys-90, Cys-82-Cys-95, and Cys-89-Cys-110.

Belongs to the neurotoxin 14 (magi-1) family. 01 (HNTX-16) subfamily. As to expression, expressed by the venom gland.

It is found in the secreted. Its function is as follows. Probable ion channel inhibitor. In Cyriopagopus hainanus (Chinese bird spider), this protein is U11-theraphotoxin-Hhn1q.